A 180-amino-acid chain; its full sequence is Ribulose bisphosphate carboxylase small subunit, chloroplastic (180 aa).

The N-terminal 56 residues, 1-56 (MASSIMSSAAVATRSNGAQASMVAPFTGLKSNASFPVSRKTNLDITSIASNGGRVR), are a transit peptide targeting the chloroplast.

The protein belongs to the RuBisCO small chain family. Heterohexadecamer of 8 large and 8 small subunits.

It localises to the plastid. The protein localises to the chloroplast. Functionally, ruBisCO catalyzes two reactions: the carboxylation of D-ribulose 1,5-bisphosphate, the primary event in carbon dioxide fixation, as well as the oxidative fragmentation of the pentose substrate. Both reactions occur simultaneously and in competition at the same active site. Although the small subunit is not catalytic it is essential for maximal activity. The chain is Ribulose bisphosphate carboxylase small subunit, chloroplastic from Stellaria longipes (Longstalk starwort).